The primary structure comprises 170 residues: Bifunctional protein PyrR (170 aa).

The PRPP-binding motif lies at 90 to 102 (LVLVDDVLMSGRT).

Belongs to the purine/pyrimidine phosphoribosyltransferase family. PyrR subfamily.

It catalyses the reaction UMP + diphosphate = 5-phospho-alpha-D-ribose 1-diphosphate + uracil. Its function is as follows. Regulates the transcription of the pyrimidine nucleotide (pyr) operon in response to exogenous pyrimidines. In terms of biological role, also displays a weak uracil phosphoribosyltransferase activity which is not physiologically significant. In Pseudomonas aeruginosa (strain LESB58), this protein is Bifunctional protein PyrR.